The sequence spans 379 residues: Cytochrome b (379 aa).

The next 4 membrane-spanning stretches (helical) occupy residues 33–53, 77–98, 113–133, and 178–198; these read FGSLLGACLTIQIITGLFLAM, WTIRYLHANGASLFFLCLFIHV, WNIGIMLLFSVMATAFMGYVL, and FFALHFILPFIISALTMIHLL. Positions 83 and 97 each coordinate heme b. Heme b contacts are provided by His182 and His196. His201 serves as a coordination point for a ubiquinone. 4 consecutive transmembrane segments (helical) span residues 226 to 246, 288 to 308, 320 to 340, and 347 to 367; these read TKDFLGLLLLILLLMTLTLFY, LGGVVALIMSILILAIMPFLQ, LSQFLFWILVADLLTLTWIGG, and FINIGQMASILYFSLMVFIMP.

This sequence belongs to the cytochrome b family. The cytochrome bc1 complex contains 11 subunits: 3 respiratory subunits (MT-CYB, CYC1 and UQCRFS1), 2 core proteins (UQCRC1 and UQCRC2) and 6 low-molecular weight proteins (UQCRH/QCR6, UQCRB/QCR7, UQCRQ/QCR8, UQCR10/QCR9, UQCR11/QCR10 and a cleavage product of UQCRFS1). This cytochrome bc1 complex then forms a dimer. Heme b is required as a cofactor.

Its subcellular location is the mitochondrion inner membrane. Functionally, component of the ubiquinol-cytochrome c reductase complex (complex III or cytochrome b-c1 complex) that is part of the mitochondrial respiratory chain. The b-c1 complex mediates electron transfer from ubiquinol to cytochrome c. Contributes to the generation of a proton gradient across the mitochondrial membrane that is then used for ATP synthesis. This Lepilemur aeeclis (Sportive lemur) protein is Cytochrome b (MT-CYB).